The following is a 145-amino-acid chain: 3-dehydroquinate dehydratase (145 aa).

The Proton acceptor role is filled by Tyr23. Residues Asn74, His80, and Asp87 each contribute to the substrate site. The Proton donor role is filled by His100. Residues 101-102 (LS) and Arg111 contribute to the substrate site.

This sequence belongs to the type-II 3-dehydroquinase family. As to quaternary structure, homododecamer.

The catalysed reaction is 3-dehydroquinate = 3-dehydroshikimate + H2O. It participates in metabolic intermediate biosynthesis; chorismate biosynthesis; chorismate from D-erythrose 4-phosphate and phosphoenolpyruvate: step 3/7. Its function is as follows. Catalyzes a trans-dehydration via an enolate intermediate. This chain is 3-dehydroquinate dehydratase, found in Bacillus licheniformis (strain ATCC 14580 / DSM 13 / JCM 2505 / CCUG 7422 / NBRC 12200 / NCIMB 9375 / NCTC 10341 / NRRL NRS-1264 / Gibson 46).